The primary structure comprises 178 residues: Small ribosomal subunit protein uS5 (178 aa).

Residues 15-78 (FEEKIIEIRR…ADAKKNVIEV (64 aa)) enclose the S5 DRBM domain.

The protein belongs to the universal ribosomal protein uS5 family. As to quaternary structure, part of the 30S ribosomal subunit. Contacts proteins S4 and S8.

Its function is as follows. With S4 and S12 plays an important role in translational accuracy. In terms of biological role, located at the back of the 30S subunit body where it stabilizes the conformation of the head with respect to the body. This is Small ribosomal subunit protein uS5 from Thermotoga neapolitana (strain ATCC 49049 / DSM 4359 / NBRC 107923 / NS-E).